Consider the following 1270-residue polypeptide: DNA-directed RNA polymerase subunit beta (1270 aa).

It belongs to the RNA polymerase beta chain family. In terms of assembly, the RNAP catalytic core consists of 2 alpha, 1 beta, 1 beta' and 1 omega subunit. When a sigma factor is associated with the core the holoenzyme is formed, which can initiate transcription.

The catalysed reaction is RNA(n) + a ribonucleoside 5'-triphosphate = RNA(n+1) + diphosphate. Functionally, DNA-dependent RNA polymerase catalyzes the transcription of DNA into RNA using the four ribonucleoside triphosphates as substrates. In Phocaeicola vulgatus (strain ATCC 8482 / DSM 1447 / JCM 5826 / CCUG 4940 / NBRC 14291 / NCTC 11154) (Bacteroides vulgatus), this protein is DNA-directed RNA polymerase subunit beta.